The chain runs to 60 residues: uncharacterized protein (60 aa).

This is an uncharacterized protein from Homo sapiens (Human).